A 301-amino-acid polypeptide reads, in one-letter code: NTE family protein RssA (301 aa).

Residues 8 to 168 enclose the PNPLA domain; that stretch reads LALGSGAARG…VNPIPISLTR (161 aa). The GXSXG motif lies at 39–43; sequence GCSIG. The active-site Nucleophile is serine 41. Catalysis depends on aspartate 155, which acts as the Proton acceptor. Residues 155–157 carry the DGA/G motif; the sequence is DGA.

The protein belongs to the NTE family.

The polypeptide is NTE family protein RssA (rssA) (Escherichia coli (strain K12)).